The following is a 494-amino-acid chain: Nuclear distribution protein PAC1 (494 aa).

The LisH domain occupies 14–46; the sequence is QKNELDKSVLRYLNWNYKQTVRHEHAQDYESVR. Residues 90–123 are a coiled coil; it reads NSIVRLQKKIIELEQNTETLVSQIKDLNTQVSEL. 7 WD repeats span residues 153–192, 196–244, 251–292, 295–334, 347–395, 415–454, and 457–492; these read NVES…IPLA, SHTK…CKFQ, GHEH…SLKT, PHSQ…SVGT, HFIE…LMAH, GHLS…HVWE, and HTGF…SNVF.

Belongs to the WD repeat LIS1/nudF family. Self-associates. Interacts with NDL1 and dynein.

It is found in the cytoplasm. It localises to the cytoskeleton. Its subcellular location is the spindle pole. In terms of biological role, positively regulates the activity of the minus-end directed microtubule motor protein dynein. Plays a central role in positioning the mitotic spindle at the bud neck during cell division. Targets cytoplasmic dynein to microtubule plus ends, thereby promoting dynein-mediated microtubule sliding along the bud cortex and consequently the movement of the mitotic spindle to the bud neck. The polypeptide is Nuclear distribution protein PAC1 (Saccharomyces cerevisiae (strain Lalvin EC1118 / Prise de mousse) (Baker's yeast)).